A 218-amino-acid chain; its full sequence is Glutathione S-transferase PM239X14 (218 aa).

Residues 2–85 enclose the GST N-terminal domain; sequence VTVKLYGMAY…YLVAKYGKGS (84 aa). Residues 12–13, 41–42, 55–56, and 69–70 each bind glutathione; these read ST, HK, VI, and ES. One can recognise a GST C-terminal domain in the interval 93–218; sequence DPKAYGLFEQ…LLRNSSKEFM (126 aa).

The protein belongs to the GST superfamily. Phi family. In terms of tissue distribution, expressed in vegetative rosettes.

The protein localises to the cytoplasm. Its subcellular location is the cytosol. The enzyme catalyses RX + glutathione = an S-substituted glutathione + a halide anion + H(+). Functionally, specifically catalyzes the conjugation of synthetic 1-chloro-2,4-ditrobenzene to GSH. Also functions as a glutathione peroxidase, converting linoleate oxidation products into their corresponding hydroxyacids. This enzyme may thus serve to protect the cell from oxygen toxicity as well as from exogenous toxins such as herbicides. The protein is Glutathione S-transferase PM239X14 of Arabidopsis thaliana (Mouse-ear cress).